A 298-amino-acid polypeptide reads, in one-letter code: N-acetylmuramic acid 6-phosphate etherase (298 aa).

Residues 55-218 (AANRYKKGGR…STGVMIRQGK (164 aa)) enclose the SIS domain. The Proton donor role is filled by glutamate 83. Glutamate 114 is a catalytic residue.

It belongs to the GCKR-like family. MurNAc-6-P etherase subfamily. As to quaternary structure, homodimer.

The enzyme catalyses N-acetyl-D-muramate 6-phosphate + H2O = N-acetyl-D-glucosamine 6-phosphate + (R)-lactate. It participates in amino-sugar metabolism; N-acetylmuramate degradation. In terms of biological role, specifically catalyzes the cleavage of the D-lactyl ether substituent of MurNAc 6-phosphate, producing GlcNAc 6-phosphate and D-lactate. The chain is N-acetylmuramic acid 6-phosphate etherase from Lactobacillus acidophilus (strain ATCC 700396 / NCK56 / N2 / NCFM).